The sequence spans 219 residues: Glutamine transport system permease protein GlnP (219 aa).

Residues 1 to 22 (MQFDWSAIWPAIPLLIEGAKMT) are Periplasmic-facing. The ABC transmembrane type-1 domain maps to 19-209 (AKMTLWISVL…IITLVLSFIL (191 aa)). A helical membrane pass occupies residues 23-43 (LWISVLGLAGGLVIGLLAGFA). At 44-53 (RTFGGWIANH) the chain is on the cytoplasmic side. A helical transmembrane segment spans residues 54–74 (VALVFIEVIRGTPIVVQVMFI). Over 75-88 (YFALPMAFNDLRID) the chain is Periplasmic. A helical membrane pass occupies residues 89 to 109 (PFTAAVVTIMINSGAYIAEIT). Residues 110-150 (RGAVLSIHKGFREAGLALGLSRWETIRYVILPLALRRMLPP) are Cytoplasmic-facing. The helical transmembrane segment at 151-171 (LGNQWIISIKDTSLFIVIGVA) threads the bilayer. The Periplasmic segment spans residues 172–187 (ELTRQGQEIIAGNFRA). Residues 188 to 208 (LEIWSAVAVFYLIITLVLSFI) form a helical membrane-spanning segment. Over 209-219 (LRRLERRMKIL) the chain is Cytoplasmic.

It belongs to the binding-protein-dependent transport system permease family. HisMQ subfamily.

The protein localises to the cell inner membrane. In terms of biological role, part of the binding-protein-dependent transport system for glutamine; probably responsible for the translocation of the substrate across the membrane. The chain is Glutamine transport system permease protein GlnP (glnP) from Escherichia coli O6:H1 (strain CFT073 / ATCC 700928 / UPEC).